Reading from the N-terminus, the 206-residue chain is Holliday junction branch migration complex subunit RuvA (206 aa).

The domain I stretch occupies residues 1 to 64 (MIGKLKGTLD…EDMLRLYGFQ (64 aa)). Residues 65 to 144 (SALEREWFRL…AYAGAASGTI (80 aa)) are domain II. The interval 145-154 (GLKQELGEGV) is flexible linker. The tract at residues 154–206 (VAPAPITDAVSALVNLGYSRDTAANAVAAALKTAGEDADASKLIRFGLKELAR) is domain III.

It belongs to the RuvA family. As to quaternary structure, homotetramer. Forms an RuvA(8)-RuvB(12)-Holliday junction (HJ) complex. HJ DNA is sandwiched between 2 RuvA tetramers; dsDNA enters through RuvA and exits via RuvB. An RuvB hexamer assembles on each DNA strand where it exits the tetramer. Each RuvB hexamer is contacted by two RuvA subunits (via domain III) on 2 adjacent RuvB subunits; this complex drives branch migration. In the full resolvosome a probable DNA-RuvA(4)-RuvB(12)-RuvC(2) complex forms which resolves the HJ.

It localises to the cytoplasm. Its function is as follows. The RuvA-RuvB-RuvC complex processes Holliday junction (HJ) DNA during genetic recombination and DNA repair, while the RuvA-RuvB complex plays an important role in the rescue of blocked DNA replication forks via replication fork reversal (RFR). RuvA specifically binds to HJ cruciform DNA, conferring on it an open structure. The RuvB hexamer acts as an ATP-dependent pump, pulling dsDNA into and through the RuvAB complex. HJ branch migration allows RuvC to scan DNA until it finds its consensus sequence, where it cleaves and resolves the cruciform DNA. The sequence is that of Holliday junction branch migration complex subunit RuvA from Mesorhizobium japonicum (strain LMG 29417 / CECT 9101 / MAFF 303099) (Mesorhizobium loti (strain MAFF 303099)).